We begin with the raw amino-acid sequence, 1080 residues long: Serine/threonine-protein kinase KIC1 (1080 aa).

The 254-residue stretch at Phe-23 to Ile-276 folds into the Protein kinase domain. Residues Ile-29–Val-37 and Lys-52 each bind ATP. Asp-144 (proton acceptor) is an active-site residue. 4 disordered regions span residues Glu-308–Arg-347, Lys-615–Pro-760, Ser-787–Pro-831, and Ser-901–Asn-956. Residues Pro-312 to Ser-326 show a composition bias toward low complexity. Residues Lys-615–Pro-626 show a composition bias toward polar residues. The span at Ser-627 to Ser-638 shows a compositional bias: low complexity. Residues Ser-656 to Ile-673 show a composition bias toward polar residues. A compositionally biased stretch (low complexity) spans Ser-674 to Ser-689. The span at Arg-693–Ser-726 shows a compositional bias: polar residues. Ser-735 carries the post-translational modification Phosphoserine. Positions Ser-743–Asn-756 are enriched in polar residues. The span at Ser-787–Ser-807 shows a compositional bias: low complexity. Positions Asn-808 to Arg-821 are enriched in basic and acidic residues. Residues Ser-901 to Ser-913 are compositionally biased toward polar residues. Low complexity predominate over residues Asn-918 to Asn-956.

The protein belongs to the protein kinase superfamily. Ser/Thr protein kinase family. Interacts with CDC31.

It catalyses the reaction L-seryl-[protein] + ATP = O-phospho-L-seryl-[protein] + ADP + H(+). The catalysed reaction is L-threonyl-[protein] + ATP = O-phospho-L-threonyl-[protein] + ADP + H(+). Protein kinase involved in morphogenesis and cell integrity. This is Serine/threonine-protein kinase KIC1 (KIC1) from Saccharomyces cerevisiae (strain ATCC 204508 / S288c) (Baker's yeast).